A 227-amino-acid chain; its full sequence is NADH-quinone oxidoreductase subunit C (227 aa).

The protein belongs to the complex I 30 kDa subunit family. As to quaternary structure, NDH-1 is composed of 14 different subunits. Subunits NuoB, C, D, E, F, and G constitute the peripheral sector of the complex.

The protein resides in the cell inner membrane. The enzyme catalyses a quinone + NADH + 5 H(+)(in) = a quinol + NAD(+) + 4 H(+)(out). Its function is as follows. NDH-1 shuttles electrons from NADH, via FMN and iron-sulfur (Fe-S) centers, to quinones in the respiratory chain. The immediate electron acceptor for the enzyme in this species is believed to be ubiquinone. Couples the redox reaction to proton translocation (for every two electrons transferred, four hydrogen ions are translocated across the cytoplasmic membrane), and thus conserves the redox energy in a proton gradient. The chain is NADH-quinone oxidoreductase subunit C from Legionella pneumophila subsp. pneumophila (strain Philadelphia 1 / ATCC 33152 / DSM 7513).